The sequence spans 1178 residues: F-box/WD repeat-containing protein A-like protein (1178 aa).

One can recognise an START domain in the interval 1-208 (MQYVNGMDIV…TLPNLIKYIK (208 aa)). Disordered regions lie at residues 223-296 (KTPD…NLNE), 569-594 (SLII…DNGI), and 618-649 (SSSS…STFS). 2 stretches are compositionally biased toward low complexity: residues 229–293 (NPNL…SNEN) and 571–580 (IINSPPNSNN). The 47-residue stretch at 717–763 (CSLFDLLPYEMIQYIFTLMDATHLIRMSRTCKYFNRICLDDNIWRDL) folds into the F-box domain. The disordered stretch occupies residues 804–841 (KKSNNSSPLSASSSSSSPSPPLLPPPPPPIPQLPDMLL). Residues 809 to 820 (SSPLSASSSSSS) show a composition bias toward low complexity. The span at 821-835 (PSPPLLPPPPPPIPQ) shows a compositional bias: pro residues. WD repeat units lie at residues 886-923 (GHKG…CEST), 925-979 (RCGA…IEKE), 981-1017 (RFLY…ELQM), 1020-1059 (IENT…TELV), 1062-1100 (GHKG…SAIH), 1104-1141 (SHSS…EPNL), and 1146-1178 (NNLS…FNSK).

Functionally, substrate recognition component of a SCF (SKP1-CUL1-F-box protein) E3 ubiquitin-protein ligase complex which mediates the ubiquitination and subsequent proteasomal degradation of target proteins. This is F-box/WD repeat-containing protein A-like protein from Dictyostelium discoideum (Social amoeba).